The chain runs to 125 residues: Large ribosomal subunit protein bL12 (125 aa).

This sequence belongs to the bacterial ribosomal protein bL12 family. As to quaternary structure, homodimer. Part of the ribosomal stalk of the 50S ribosomal subunit. Forms a multimeric L10(L12)X complex, where L10 forms an elongated spine to which 2 to 4 L12 dimers bind in a sequential fashion. Binds GTP-bound translation factors.

Its function is as follows. Forms part of the ribosomal stalk which helps the ribosome interact with GTP-bound translation factors. Is thus essential for accurate translation. The polypeptide is Large ribosomal subunit protein bL12 (Anaeromyxobacter sp. (strain Fw109-5)).